Here is a 286-residue protein sequence, read N- to C-terminus: Protein HEXIM2 (286 aa).

Over residues 1-11 the composition is skewed to polar residues; it reads MMATPNQTACN. Residues 1–195 are disordered; it reads MMATPNQTAC…GEFQRKDFSE (195 aa). At serine 29 the chain carries Phosphoserine. Residue threonine 32 is modified to Phosphothreonine. Residue serine 39 is modified to Phosphoserine. Phosphothreonine is present on threonine 46. Phosphoserine occurs at positions 51, 53, 71, 76, and 81. Residues 68–78 are compositionally biased toward polar residues; sequence NSRSPRTQSPG. Basic residues predominate over residues 87-103; the sequence is ARKKHRRRPSKRKRHWR. A compositionally biased stretch (basic and acidic residues) spans 113–132; it reads KQQRDERQSQRASRVREEMF. The interaction with P-TEFb stretch occupies residues 140–143; sequence PYNT. The span at 178 to 195 shows a compositional bias: basic and acidic residues; sequence SDGRGRAHGEFQRKDFSE. A coiled-coil region spans residues 207–277; sequence GRSKQELVRD…QENQMWNREG (71 aa). Positions 226–286 are interaction with CCNT1, HEXIM1 and HEXIM2; it reads QAEEETRRLQ…GCRCDEEPGT (61 aa).

This sequence belongs to the HEXIM family. As to quaternary structure, homooligomer and heterooligomer with HEXIM1; probably dimeric. Core component of the 7SK RNP complex, at least composed of 7SK RNA, LARP7, MEPCE, HEXIM1 (or HEXIM2) and P-TEFb (composed of CDK9 and CCNT1/cyclin-T1). Interacts with CCNT2. As to expression, ubiquitously expressed with higher expression in testis. HEXIM1 and HEXIM2 are differentially expressed.

It is found in the nucleus. Functionally, transcriptional regulator which functions as a general RNA polymerase II transcription inhibitor. Core component of the 7SK RNP complex: in cooperation with 7SK snRNA sequesters P-TEFb in a large inactive 7SK snRNP complex preventing RNA polymerase II phosphorylation and subsequent transcriptional elongation. The chain is Protein HEXIM2 (HEXIM2) from Homo sapiens (Human).